The following is a 62-amino-acid chain: Large ribosomal subunit protein uL30 (62 aa).

The protein belongs to the universal ribosomal protein uL30 family. As to quaternary structure, part of the 50S ribosomal subunit.

The chain is Large ribosomal subunit protein uL30 from Pseudoalteromonas atlantica (strain T6c / ATCC BAA-1087).